Consider the following 474-residue polypeptide: tRNA-2-methylthio-N(6)-dimethylallyladenosine synthase (474 aa).

An MTTase N-terminal domain is found at 3–120 (KKLLIKTWGC…LPEMIRQSQS (118 aa)). Residues C12, C49, C83, C157, C161, and C164 each coordinate [4Fe-4S] cluster. The Radical SAM core domain maps to 143 to 375 (KAEGATAFVS…QQQVNSQAMR (233 aa)). One can recognise a TRAM domain in the interval 378–441 (RLMLDTEQRV…ANSLRGELVR (64 aa)).

It belongs to the methylthiotransferase family. MiaB subfamily. In terms of assembly, monomer. [4Fe-4S] cluster serves as cofactor.

Its subcellular location is the cytoplasm. The catalysed reaction is N(6)-dimethylallyladenosine(37) in tRNA + (sulfur carrier)-SH + AH2 + 2 S-adenosyl-L-methionine = 2-methylsulfanyl-N(6)-dimethylallyladenosine(37) in tRNA + (sulfur carrier)-H + 5'-deoxyadenosine + L-methionine + A + S-adenosyl-L-homocysteine + 2 H(+). Catalyzes the methylthiolation of N6-(dimethylallyl)adenosine (i(6)A), leading to the formation of 2-methylthio-N6-(dimethylallyl)adenosine (ms(2)i(6)A) at position 37 in tRNAs that read codons beginning with uridine. In Aliivibrio fischeri (strain ATCC 700601 / ES114) (Vibrio fischeri), this protein is tRNA-2-methylthio-N(6)-dimethylallyladenosine synthase.